Reading from the N-terminus, the 105-residue chain is Large ribosomal subunit protein eL36 (105 aa).

This sequence belongs to the eukaryotic ribosomal protein eL36 family. In terms of assembly, component of the large ribosomal subunit.

Its subcellular location is the cytoplasm. The protein resides in the cytosol. In terms of biological role, component of the large ribosomal subunit. The ribosome is a large ribonucleoprotein complex responsible for the synthesis of proteins in the cell. In Hydrophis hardwickii (Hardwick's spine-bellied seasnake), this protein is Large ribosomal subunit protein eL36 (RPL36).